The chain runs to 122 residues: Protein GL2-INTERACTING REPRESSOR 1 (122 aa).

The segment covering 1 to 10 has biased composition (basic and acidic residues); sequence MSRRSPKLEL. The tract at residues 1–62 is disordered; that stretch reads MSRRSPKLEL…PSVRYSTSPE (62 aa). The EAR signature appears at 7–12; the sequence is KLELKL. The segment covering 27–46 has biased composition (low complexity); sequence SPSRSATTSPTSPPSSCVSS. The span at 47-62 shows a compositional bias: polar residues; the sequence is EMNQDEPSVRYSTSPE.

In terms of assembly, interacts with GL2. Interacts with TPL. Expressed in root and shoot meristems.

The protein resides in the nucleus. In terms of biological role, acts as a negative regulator of root hair development redundantly with GIR2. GIR1 and GIR2 may function as adapter proteins that associate with GL2 and participate in the control of root hair formation. GIR1 and GIR2 may function as adapter proteins that associate with TPL and participate in the repression of root gene expression. In Arabidopsis thaliana (Mouse-ear cress), this protein is Protein GL2-INTERACTING REPRESSOR 1.